Here is a 1026-residue protein sequence, read N- to C-terminus: Multidrug resistance protein MdtC (1026 aa).

Transmembrane regions (helical) follow at residues 15–35 (ILIA…LPVA), 333–353 (EVEE…FLFL), 360–380 (LIPA…MYLC), 387–407 (LSLM…IVVL), 431–451 (VGFT…PLLL), 463–483 (FAVT…TLTP), 528–548 (LVGV…IAIP), 853–873 (LILI…LYES), 897–917 (LFNA…IGIV), 953–973 (PIMM…LSGG), and 984–1004 (ITIV…TPVV).

The protein belongs to the resistance-nodulation-cell division (RND) (TC 2.A.6) family. MdtC subfamily. Part of a tripartite efflux system composed of MdtA, MdtB and MdtC. MdtC forms a heteromultimer with MdtB.

The protein localises to the cell inner membrane. The sequence is that of Multidrug resistance protein MdtC from Salmonella agona (strain SL483).